We begin with the raw amino-acid sequence, 201 residues long: Troponin I (201 aa).

Position 1 is an N-acetylalanine (alanine 1). A compositionally biased stretch (basic and acidic residues) spans 1-33 (ADKAKAAEEAKKKQDDIDRKKAEVRKRLEEQSL). The interval 1 to 45 (ADKAKAAEEAKKKQDDIDRKKAEVRKRLEEQSLKKQKKGFMTPER) is disordered. Residues 108-117 (IESDKYDVEL) are troponin T-interaction. The interval 135–148 (DLRGKFIKPTLKKV) is actin-binding. Lysine 142 and lysine 146 each carry N6,N6,N6-trimethyllysine. The interval 182–201 (EDDKGATEGDGPAAEEVAAE) is disordered.

Belongs to the troponin I family.

Its function is as follows. Troponin I is the actomyosin ATPase inhibitory subunit present in the thin filament regulatory complex. This is Troponin I from Astacus leptodactylus (Turkish narrow-clawed crayfish).